The following is a 270-amino-acid chain: Nuclease PA3 (270 aa).

The a divalent metal cation site is built by Trp1, His6, His15, Asp45, and His60. 1–6 provides a ligand contact to substrate; the sequence is WGALGH. Substrate is bound by residues 45-51, 60-63, and 73-78; these read DEYRLTS, HFID, and NVDYER. 2 cysteine pairs are disulfide-bonded: Cys72/Cys217 and Cys80/Cys85. Asn92 contacts substrate. An N-linked (GlcNAc...) asparagine glycan is attached at Asn92. The a divalent metal cation site is built by His116, Asp120, and His126. The substrate binding stretch occupies residues 116-164; it reads HFIGDMTQPLHDEAYAVGGNKINVTFDGYHDNLHSDWDTYMPQKLIGGH. The N-linked (GlcNAc...) asparagine glycan is linked to Asn138. A divalent metal cation-binding residues include His149 and Asp153. 2 N-linked (GlcNAc...) asparagine glycosylation sites follow: Asn184 and Asn197.

The protein belongs to the nuclease type I family. It depends on Zn(2+) as a cofactor.

The protein resides in the secreted. The enzyme catalyses a ribonucleoside 3'-phosphate + H2O = a ribonucleoside + phosphate. In terms of biological role, hydrolyzes only single-stranded DNA and RNA without apparent specificity for bases. This Penicillium sp protein is Nuclease PA3.